We begin with the raw amino-acid sequence, 292 residues long: MFKGVYTALITPFKNRAVDYTALAKLVEQQINGGIHGLVPCGTTGESATLSHEEHKAVIRTVVELVQGRVKVLAGTGSNCTEESTELTCYAEEVGADGALLITPYYNKPTQAGLIAHYTTVANHTKLPVVLYNVPGRTAVDMHADTVIALSKVSNIVAIKEATGNMERASQIHKGAGSSMTLISGDDATFLPFLSVGGQGVISVTTNLAPRLVRDLWDLWHNGQINEAREVHEQLLEINGLLFCETSPIPVKAGAAMLGLCHNELRLPMTAMSEANQAKLHRAMVKLNLLEE.

Threonine 44 contacts pyruvate. Tyrosine 132 (proton donor/acceptor) is an active-site residue. Residue lysine 160 is the Schiff-base intermediate with substrate of the active site. Isoleucine 202 lines the pyruvate pocket.

The protein belongs to the DapA family. As to quaternary structure, homotetramer; dimer of dimers.

Its subcellular location is the cytoplasm. It carries out the reaction L-aspartate 4-semialdehyde + pyruvate = (2S,4S)-4-hydroxy-2,3,4,5-tetrahydrodipicolinate + H2O + H(+). It functions in the pathway amino-acid biosynthesis; L-lysine biosynthesis via DAP pathway; (S)-tetrahydrodipicolinate from L-aspartate: step 3/4. In terms of biological role, catalyzes the condensation of (S)-aspartate-beta-semialdehyde [(S)-ASA] and pyruvate to 4-hydroxy-tetrahydrodipicolinate (HTPA). This is 4-hydroxy-tetrahydrodipicolinate synthase from Magnetococcus marinus (strain ATCC BAA-1437 / JCM 17883 / MC-1).